Reading from the N-terminus, the 253-residue chain is Hydroxyacylglutathione hydrolase (253 aa).

Zn(2+) is bound by residues histidine 59, histidine 61, aspartate 63, histidine 64, histidine 118, aspartate 143, and histidine 181.

The protein belongs to the metallo-beta-lactamase superfamily. Glyoxalase II family. Monomer. It depends on Zn(2+) as a cofactor.

The enzyme catalyses an S-(2-hydroxyacyl)glutathione + H2O = a 2-hydroxy carboxylate + glutathione + H(+). It participates in secondary metabolite metabolism; methylglyoxal degradation; (R)-lactate from methylglyoxal: step 2/2. Its function is as follows. Thiolesterase that catalyzes the hydrolysis of S-D-lactoyl-glutathione to form glutathione and D-lactic acid. This chain is Hydroxyacylglutathione hydrolase, found in Prochlorococcus marinus (strain SARG / CCMP1375 / SS120).